The chain runs to 789 residues: Potassium transporter 4 (789 aa).

The Cytoplasmic segment spans residues 1 to 32; that stretch reads MAPAESGVSPRRNPSQLSWMNLSSNLILAYQS. At serine 9 the chain carries Phosphoserine. The helical transmembrane segment at 33-53 threads the bilayer; it reads FGVVYGDLSTSPLYVFPSTFI. Residues 54 to 68 lie on the Extracellular side of the membrane; the sequence is GKLHKHHNEDAVFGA. A helical membrane pass occupies residues 69 to 89; it reads FSLIFWTLTLIPLLKYLLVLL. Residues 90–154 lie on the Cytoplasmic side of the membrane; sequence SADDNGEGGT…FLEKHKRLRT (65 aa). The helical transmembrane segment at 155 to 175 threads the bilayer; the sequence is ALLLVVLFGAAMVIGDGVLTP. Residues 176-195 lie on the Extracellular side of the membrane; sequence ALSVLSSLSGLQATEKNVTD. Residues 196–216 traverse the membrane as a helical segment; that stretch reads GELLVLACVILVGLFALQHCG. Residues 217-219 are Cytoplasmic-facing; it reads THR. Residues 220–240 form a helical membrane-spanning segment; it reads VAFMFAPIVIIWLISIFFIGL. At 241–270 the chain is on the extracellular side; it reads YNIIRWNPKIIHAVSPLYIIKFFRVTGQDG. A helical transmembrane segment spans residues 271–291; sequence WISLGGVLLSVTGTEAMFANL. The Cytoplasmic portion of the chain corresponds to 292–300; the sequence is GHFTSVSIR. A helical membrane pass occupies residues 301-321; sequence VAFAVVVYPCLVVQYMGQAAF. Over 322–340 the chain is Extracellular; that stretch reads LSKNLGSIPNSFYDSVPDP. The helical transmembrane segment at 341–361 threads the bilayer; the sequence is VFWPVFVIATLAAIVGSQAVI. The Cytoplasmic portion of the chain corresponds to 362 to 392; that stretch reads TTTFSIIKQCHALGCFPRIKVVHTSKHIYGQ. A helical transmembrane segment spans residues 393-413; it reads IYIPEINWILMILTLAMAIGF. The Extracellular portion of the chain corresponds to 414-424; the sequence is RDTTLIGNAYG. Residues 425–445 traverse the membrane as a helical segment; the sequence is IACMVVMFITTFFMALVIVVV. Over 446–450 the chain is Cytoplasmic; sequence WQKSC. The helical transmembrane segment at 451-471 threads the bilayer; it reads FLAALFLGTLWIIEGVYLSAA. Residues 472–478 lie on the Extracellular side of the membrane; sequence LMKVTEG. The chain crosses the membrane as a helical span at residues 479 to 499; that stretch reads GWVPFVLTFIFMIAMYVWHYG. Residues 500–789 lie on the Cytoplasmic side of the membrane; it reads TRRKYSFDLH…LIEVGMIYYV (290 aa).

Belongs to the HAK/KUP transporter (TC 2.A.72.3) family. In terms of tissue distribution, detected at very low levels in roots, stems, leaves and flowers of mature plants and strongly expressed in the roots of potassium-starved plants.

It is found in the cell membrane. In terms of biological role, high-affinity potassium transporter. The polypeptide is Potassium transporter 4 (POT4) (Arabidopsis thaliana (Mouse-ear cress)).